Consider the following 562-residue polypeptide: Cytosolic invertase 1 (562 aa).

This sequence belongs to the glycosyl hydrolase 100 family.

It localises to the cytoplasm. The protein resides in the cytosol. It catalyses the reaction Hydrolysis of terminal non-reducing beta-D-fructofuranoside residues in beta-D-fructofuranosides.. In terms of biological role, cytosolic invertase that cleaves sucrose into glucose and fructose and is involved in the regulation of primary root elongation, lateral root formation, floral transition and pollen development. The protein is Cytosolic invertase 1 of Oryza sativa subsp. japonica (Rice).